Consider the following 490-residue polypeptide: GTPase Der (490 aa).

The region spanning 3 to 166 (PVIALVGRPN…IALSEFPKDD (164 aa)) is the EngA-type G 1 domain. GTP is bound by residues 9-16 (GRPNVGKS), 56-60 (DTGGI), and 118-121 (NKVD). The tract at residues 164 to 191 (KDDADEPEEGEEEIVAEGEEAKRIPGPS) is disordered. A compositionally biased stretch (acidic residues) spans 166-181 (DADEPEEGEEEIVAEG). Residues 182 to 191 (EEAKRIPGPS) are compositionally biased toward basic and acidic residues. Positions 196–369 (IKIAIIGRPN…SVQNSFKSAV (174 aa)) constitute an EngA-type G 2 domain. GTP contacts are provided by residues 202–209 (GRPNVGKS), 249–253 (DTAGV), and 314–317 (NKWD). Positions 370–454 (TRWPTSRLTQ…PIRIEFKGGE (85 aa)) constitute a KH-like domain. The interval 452-490 (GGENPYEGNKNTLTDRQVNKKRRLMSHHKKADKKRRDKR) is disordered. Positions 470-490 (NKKRRLMSHHKKADKKRRDKR) are enriched in basic residues.

This sequence belongs to the TRAFAC class TrmE-Era-EngA-EngB-Septin-like GTPase superfamily. EngA (Der) GTPase family. Associates with the 50S ribosomal subunit.

GTPase that plays an essential role in the late steps of ribosome biogenesis. The protein is GTPase Der of Pseudomonas fluorescens (strain ATCC BAA-477 / NRRL B-23932 / Pf-5).